The sequence spans 59 residues: Alpha-conotoxin CIA (59 aa).

The first 16 residues, 1 to 16 (MFTVFLLVVLTITVVS), serve as a signal peptide directing secretion. Positions 17 to 42 (FPSDRASDGRDDEAKDERSDMYKSKR) are excised as a propeptide. 2 disulfides stabilise this stretch: Cys-46–Cys-51 and Cys-47–Cys-57. The residue at position 57 (Cys-57) is a Cysteine amide.

This sequence belongs to the conotoxin A superfamily. In terms of tissue distribution, expressed by the venom duct.

It localises to the secreted. Its function is as follows. Alpha-conotoxins act on postsynaptic membranes, they bind to the nicotinic acetylcholine receptors (nAChR) and thus inhibit them. This toxin blocks the rat muscle nAChRs alpha-1-beta-1-gamma-delta (CHRNA1-CHRNB1-CHRNG-CHRND) (IC(50)=5.7 nM) and the rat neuronal nAChR alpha-3-beta-2/CHRNA3-CHRNB2 (IC(50)=2060 nM). In vivo, intramuscular injection into zebrafish produces rapid flaccid paralysis. This Conus catus (Cat cone) protein is Alpha-conotoxin CIA.